A 504-amino-acid chain; its full sequence is Cytochrome P450 71B4 (504 aa).

The helical transmembrane segment at 1–21 (MVSLLSFFLLLLVPIFFLLIF) threads the bilayer. Heme is bound at residue cysteine 446.

The protein belongs to the cytochrome P450 family. The cofactor is heme.

It is found in the membrane. The protein is Cytochrome P450 71B4 (CYP71B4) of Arabidopsis thaliana (Mouse-ear cress).